Consider the following 527-residue polypeptide: Bifunctional purine biosynthesis protein PurH (527 aa).

The MGS-like domain occupies methionine 1 to threonine 149.

This sequence belongs to the PurH family.

The enzyme catalyses (6R)-10-formyltetrahydrofolate + 5-amino-1-(5-phospho-beta-D-ribosyl)imidazole-4-carboxamide = 5-formamido-1-(5-phospho-D-ribosyl)imidazole-4-carboxamide + (6S)-5,6,7,8-tetrahydrofolate. The catalysed reaction is IMP + H2O = 5-formamido-1-(5-phospho-D-ribosyl)imidazole-4-carboxamide. It participates in purine metabolism; IMP biosynthesis via de novo pathway; 5-formamido-1-(5-phospho-D-ribosyl)imidazole-4-carboxamide from 5-amino-1-(5-phospho-D-ribosyl)imidazole-4-carboxamide (10-formyl THF route): step 1/1. It functions in the pathway purine metabolism; IMP biosynthesis via de novo pathway; IMP from 5-formamido-1-(5-phospho-D-ribosyl)imidazole-4-carboxamide: step 1/1. The chain is Bifunctional purine biosynthesis protein PurH from Xanthomonas oryzae pv. oryzae (strain PXO99A).